Reading from the N-terminus, the 382-residue chain is Prolargin (382 aa).

Positions 1–20 (MRSPLCWLLPLLILASVAQG) are cleaved as a signal peptide. The segment at 19 to 66 (QGQPTRRPRPGTGPGRRPRPRPRPTPSFPQPDEPAEPTDLPPPLPPGP) is disordered. Composition is skewed to pro residues over residues 41 to 50 (RPTPSFPQPD) and 57 to 66 (DLPPPLPPGP). LRR repeat units lie at residues 95–114 (RKVP…NNFI), 115–138 (TELP…NNRI), 139–162 (RKID…KNQL), 163–183 (EEVP…QNHI), 184–207 (SRIP…HNRL), 208–233 (SDGV…HNIL), 234–254 (RKMP…SNKI), 255–278 (ETIP…YNKL), 279–303 (TDRG…HNRI), 304–323 (SSVP…NNSI), 324–362 (EKIN…GNYL), and 363–382 (KPPI…SVVI). Asparagine 124 carries an N-linked (GlcNAc...) asparagine glycan. Asparagine 289, asparagine 320, and asparagine 327 each carry an N-linked (GlcNAc...) asparagine glycan. Cysteine 332 and cysteine 373 are oxidised to a cystine.

This sequence belongs to the small leucine-rich proteoglycan (SLRP) family. SLRP class II subfamily. As to quaternary structure, binds the basement membrane heparan sulfate proteoglycan perlecan and triple helical collagens type I and type II. Post-translationally, glycosylated; contains heparan sulfate. As to expression, connective tissue.

It is found in the secreted. Its subcellular location is the extracellular space. It localises to the extracellular matrix. Its function is as follows. May anchor basement membranes to the underlying connective tissue. This chain is Prolargin (PRELP), found in Homo sapiens (Human).